A 342-amino-acid polypeptide reads, in one-letter code: S-adenosylmethionine:tRNA ribosyltransferase-isomerase (342 aa).

Belongs to the QueA family. As to quaternary structure, monomer.

It localises to the cytoplasm. The catalysed reaction is 7-aminomethyl-7-carbaguanosine(34) in tRNA + S-adenosyl-L-methionine = epoxyqueuosine(34) in tRNA + adenine + L-methionine + 2 H(+). The protein operates within tRNA modification; tRNA-queuosine biosynthesis. Functionally, transfers and isomerizes the ribose moiety from AdoMet to the 7-aminomethyl group of 7-deazaguanine (preQ1-tRNA) to give epoxyqueuosine (oQ-tRNA). This chain is S-adenosylmethionine:tRNA ribosyltransferase-isomerase, found in Streptococcus pyogenes serotype M49 (strain NZ131).